The primary structure comprises 116 residues: Nitrogenase-stabilizing/protective protein NifW (116 aa).

It belongs to the NifW family. As to quaternary structure, homotrimer; associates with NifD.

Its function is as follows. May protect the nitrogenase Fe-Mo protein from oxidative damage. This Rhodopseudomonas palustris (strain TIE-1) protein is Nitrogenase-stabilizing/protective protein NifW.